We begin with the raw amino-acid sequence, 383 residues long: S-adenosylmethionine synthase (383 aa).

Residue H16 participates in ATP binding. D18 serves as a coordination point for Mg(2+). E44 is a binding site for K(+). Residues E57 and Q98 each contribute to the L-methionine site. The segment at Q98–I108 is flexible loop. ATP-binding positions include D158–K160, R226–F227, D235, R241–K242, A258, and K262. An L-methionine-binding site is contributed by D235. K266 serves as a coordination point for L-methionine.

It belongs to the AdoMet synthase family. In terms of assembly, homotetramer; dimer of dimers. It depends on Mg(2+) as a cofactor. The cofactor is K(+).

The protein localises to the cytoplasm. It catalyses the reaction L-methionine + ATP + H2O = S-adenosyl-L-methionine + phosphate + diphosphate. It participates in amino-acid biosynthesis; S-adenosyl-L-methionine biosynthesis; S-adenosyl-L-methionine from L-methionine: step 1/1. Catalyzes the formation of S-adenosylmethionine (AdoMet) from methionine and ATP. The overall synthetic reaction is composed of two sequential steps, AdoMet formation and the subsequent tripolyphosphate hydrolysis which occurs prior to release of AdoMet from the enzyme. The chain is S-adenosylmethionine synthase from Fusobacterium nucleatum subsp. nucleatum (strain ATCC 25586 / DSM 15643 / BCRC 10681 / CIP 101130 / JCM 8532 / KCTC 2640 / LMG 13131 / VPI 4355).